A 223-amino-acid polypeptide reads, in one-letter code: Endonuclease NucS (223 aa).

The protein belongs to the NucS endonuclease family.

Its subcellular location is the cytoplasm. In terms of biological role, cleaves both 3' and 5' ssDNA extremities of branched DNA structures. This is Endonuclease NucS from Mycolicibacterium gilvum (strain PYR-GCK) (Mycobacterium gilvum (strain PYR-GCK)).